Reading from the N-terminus, the 429-residue chain is Histidine--tRNA ligase (429 aa).

It belongs to the class-II aminoacyl-tRNA synthetase family. As to quaternary structure, homodimer.

It is found in the cytoplasm. It carries out the reaction tRNA(His) + L-histidine + ATP = L-histidyl-tRNA(His) + AMP + diphosphate + H(+). The sequence is that of Histidine--tRNA ligase from Desulfotalea psychrophila (strain LSv54 / DSM 12343).